Consider the following 246-residue polypeptide: MFQLPILNFSPQQVAGVCETLEESGDVERLGRFLWSLPVAPAACEALNKNESVLRARAIVAFHGGNYRELYHILENHKFTKESHAKLQALWLEAHYQEAEKLRGRPLGPVDKYRVRKKFPLPRTIWDGEQKTHCFKERTRHLLREWYLQDPYPNPSKKRELAQATGLTPTQVGNWFKNRRQRDRAAAAKNRLQQQVLSQGPGRVLRSEGEGTPEVLGVASSPAASLSSKAATSAISITSSDSECDI.

A DNA-binding region (homeobox) is located at residues tryptophan 126–alanine 186. The interval asparagine 190–isoleucine 246 is disordered. Threonine 212 carries the post-translational modification Phosphothreonine. The span at alanine 219–isoleucine 246 shows a compositional bias: low complexity. Phosphoserine occurs at positions 221, 225, 227, and 228.

The protein belongs to the SIX/Sine oculis homeobox family. Interacts with TLE4 and TLE5. In terms of tissue distribution, in the developing embryo, expressed mainly in the ventral optic stalk, optic chiasma, the neural retina and the primordial tissues that give rise to the pituitary/hypothalamus axis. Not expressed in the lens placode.

The protein resides in the nucleus. Functionally, may be involved in eye development. In Mus musculus (Mouse), this protein is Homeobox protein SIX6 (Six6).